The sequence spans 449 residues: Heterogeneous nuclear ribonucleoprotein H2 (449 aa).

At methionine 1 the chain carries N-acetylmethionine. The residue at position 2 (methionine 2) is an N-acetylmethionine; in Heterogeneous nuclear ribonucleoprotein H2, N-terminally processed. The RRM 1 domain occupies 11-90 (FVVKVRGLPW…RYVEVFKSNS (80 aa)). Serine 23 carries the phosphoserine modification. Lysine 35 participates in a covalent cross-link: Glycyl lysine isopeptide (Lys-Gly) (interchain with G-Cter in SUMO2). Residues serine 54 and serine 63 each carry the phosphoserine modification. Residue lysine 87 forms a Glycyl lysine isopeptide (Lys-Gly) (interchain with G-Cter in SUMO2) linkage. Serine 90 bears the Phosphoserine mark. Residue lysine 98 forms a Glycyl lysine isopeptide (Lys-Gly) (interchain with G-Cter in SUMO2) linkage. Residues 111-188 (GFVRLRGLPF…RYIEIFKSSR (78 aa)) form the RRM 2 domain. Arginine 233 carries the post-translational modification Dimethylated arginine; alternate. The residue at position 233 (arginine 233) is an Omega-N-methylarginine; alternate. Residues 234 to 249 (GAYGGGYGGYDDYGGY) form a 1-1 repeat. The tract at residues 234–433 (GAYGGGYGGY…YGGQSSMSGY (200 aa)) is 2 X 16 AA Gly-rich approximate repeats. Position 246 is a phosphotyrosine (tyrosine 246). The RRM 3 domain maps to 289–364 (HCVHMRGLPY…RYVELFLNST (76 aa)). Position 310 is a phosphoserine (serine 310). Tandem repeats lie at residues 354–372 (HRYV…GGAY), 374–392 (HSYV…GGAY), and 418–433 (GGYG…MSGY). The segment at 354-392 (HRYVELFLNSTAGTSGGAYDHSYVELFLNSTAGASGGAY) is 2 X 19 AA perfect repeats.

As to quaternary structure, component of a ribonucleoprotein complex containing mRNAs and RNA-binding proteins including DDX5, HNRNPH2 and SRSF1 as well as splicing regulator ARVCF. Interacts with TXNL4/DIM1.

The protein resides in the nucleus. It is found in the nucleoplasm. Its function is as follows. This protein is a component of the heterogeneous nuclear ribonucleoprotein (hnRNP) complexes which provide the substrate for the processing events that pre-mRNAs undergo before becoming functional, translatable mRNAs in the cytoplasm. Binds poly(RG). The protein is Heterogeneous nuclear ribonucleoprotein H2 (HNRNPH2) of Bos taurus (Bovine).